The primary structure comprises 380 residues: 1-deoxy-D-xylulose 5-phosphate reductoisomerase (380 aa).

8 residues coordinate NADPH: Thr10, Gly11, Ser12, Ile13, Gly36, Arg37, Asn38, and Asn120. Residue Lys121 participates in 1-deoxy-D-xylulose 5-phosphate binding. Glu122 contributes to the NADPH binding site. Position 146 (Asp146) interacts with Mn(2+). Residues Ser147, Glu148, Ser172, and His195 each contribute to the 1-deoxy-D-xylulose 5-phosphate site. Residue Glu148 participates in Mn(2+) binding. Gly201 lines the NADPH pocket. 4 residues coordinate 1-deoxy-D-xylulose 5-phosphate: Ser208, Asn213, Lys214, and Glu217. Position 217 (Glu217) interacts with Mn(2+).

This sequence belongs to the DXR family. Mg(2+) serves as cofactor. Requires Mn(2+) as cofactor.

It catalyses the reaction 2-C-methyl-D-erythritol 4-phosphate + NADP(+) = 1-deoxy-D-xylulose 5-phosphate + NADPH + H(+). The protein operates within isoprenoid biosynthesis; isopentenyl diphosphate biosynthesis via DXP pathway; isopentenyl diphosphate from 1-deoxy-D-xylulose 5-phosphate: step 1/6. Catalyzes the NADPH-dependent rearrangement and reduction of 1-deoxy-D-xylulose-5-phosphate (DXP) to 2-C-methyl-D-erythritol 4-phosphate (MEP). The polypeptide is 1-deoxy-D-xylulose 5-phosphate reductoisomerase (Listeria monocytogenes serotype 4a (strain HCC23)).